A 680-amino-acid chain; its full sequence is Leucine-rich repeat and calponin homology domain-containing protein 4 (680 aa).

Positions 1–22 are enriched in low complexity; it reads MAAAVAGPLAAGGEEAAASVSL. Residues 1-35 form a disordered region; the sequence is MAAAVAGPLAAGGEEAAASVSLPGSPGLPGSRSAE. LRR repeat units lie at residues 41–64, 67–90, 92–113, 114–136, 138–158, 159–181, 182–204, 206–226, and 227–250; these read AVAT…AARS, LSDI…ACQL, SLEG…LGNL, TALT…ICQL, LRVL…ISTL, GSLR…LCSL, RSLR…LGDL, LVRL…FCRL, and RHLQ…CLKG. S279, S281, S304, S307, S309, and S313 each carry phosphoserine. Residues 329 to 528 form a disordered region; the sequence is SELARDPRGP…PSSPESVLRP (200 aa). The span at 330 to 345 shows a compositional bias: basic and acidic residues; the sequence is ELARDPRGPRQPREDG. The span at 346–355 shows a compositional bias: acidic residues; the sequence is AGDGDLEQID. Basic and acidic residues-rich tracts occupy residues 357–371 and 385–418; these read IDSH…RSAA and DVEK…ERKQ. S432 bears the Phosphoserine mark. 2 stretches are compositionally biased toward low complexity: residues 440-453 and 510-528; these read AAGA…TQAT and RSSS…VLRP. Phosphoserine is present on residues S511, S513, S517, S521, and S586. In terms of domain architecture, Calponin-homology (CH) spans 531–644; that stretch reads FPQEKELISQ…VLEAVILVGG (114 aa). The helical transmembrane segment at 655-675 threads the bilayer; that stretch reads GLGGFLLFYVVFMLLLYVVYT.

Widely expressed across tissues, with the most abundant expression in spleen, testes, thymus, intestine, and blood. Expressed in macrophages.

Its subcellular location is the cell membrane. In terms of biological role, accessory protein that regulates signaling by multiple TLRs, acting as a broad-spanning regulator of the innate immune response. In macrophages, binds LPS and promotes proper docking of LPS in lipid raft membrane. May be required for lipid raft maintenance. This chain is Leucine-rich repeat and calponin homology domain-containing protein 4 (Lrch4), found in Mus musculus (Mouse).